A 332-amino-acid chain; its full sequence is Cysteine and histidine-rich domain-containing protein 1 (332 aa).

Residue alanine 2 is modified to N-acetylalanine. Residues 2 to 77 are interaction with PPP5C; it reads ALLCYNRGCG…KPPEPVKPEV (76 aa). Residues cysteine 5, cysteine 10, cysteine 24, histidine 27, cysteine 42, and cysteine 43 each coordinate Zn(2+). 2 CHORD domains span residues 5-64 and 157-216; these read CYNR…KGRH and CKNG…KGKH. Threonine 47 carries the post-translational modification Phosphothreonine. Serine 51 carries the phosphoserine modification. Residues cysteine 59, histidine 64, cysteine 157, cysteine 162, cysteine 176, histidine 179, cysteine 194, cysteine 195, cysteine 211, and histidine 216 each contribute to the Zn(2+) site. Residues 65–316 form an interaction with HSP90AA1 and HSP90AB1 region; that stretch reads NSEKPPEPVK…AEPMQWASLE (252 aa). The CS domain maps to 227-316; it reads VVPCRHDWHQ…AEPMQWASLE (90 aa).

Interacts with HSP90AA1, ROCK1 and ROCK2. Interacts with HSP90AB1 and PPP5C. Underexpressed in many breast and lung cancers.

Functionally, regulates centrosome duplication, probably by inhibiting the kinase activity of ROCK2. Proposed to act as co-chaperone for HSP90. May play a role in the regulation of NOD1 via a HSP90 chaperone complex. In vitro, has intrinsic chaperone activity. This function may be achieved by inhibiting association of ROCK2 with NPM1. Plays a role in ensuring the localization of the tyrosine kinase receptor EGFR to the plasma membrane, and thus ensures the subsequent regulation of EGFR activity and EGF-induced actin cytoskeleton remodeling. Involved in stress response. Prevents tumorigenesis. The polypeptide is Cysteine and histidine-rich domain-containing protein 1 (CHORDC1) (Homo sapiens (Human)).